A 202-amino-acid chain; its full sequence is Holliday junction branch migration complex subunit RuvA (202 aa).

Positions 1–63 are domain I; sequence MIASLRGTVL…EDSMTLYGFT (63 aa). Residues 64-142 are domain II; that stretch reads SQDDRDMFHV…AFAPAESADL (79 aa). The segment at 143–148 is flexible linker; that stretch reads SSAAPA. The tract at residues 149 to 202 is domain III; that stretch reads AAGPVVEDVVEALIGLGFTDKMARPVVESVVAEQPDAATPVVLRAALSQLGAKK.

Belongs to the RuvA family. Homotetramer. Forms an RuvA(8)-RuvB(12)-Holliday junction (HJ) complex. HJ DNA is sandwiched between 2 RuvA tetramers; dsDNA enters through RuvA and exits via RuvB. An RuvB hexamer assembles on each DNA strand where it exits the tetramer. Each RuvB hexamer is contacted by two RuvA subunits (via domain III) on 2 adjacent RuvB subunits; this complex drives branch migration. In the full resolvosome a probable DNA-RuvA(4)-RuvB(12)-RuvC(2) complex forms which resolves the HJ.

Its subcellular location is the cytoplasm. In terms of biological role, the RuvA-RuvB-RuvC complex processes Holliday junction (HJ) DNA during genetic recombination and DNA repair, while the RuvA-RuvB complex plays an important role in the rescue of blocked DNA replication forks via replication fork reversal (RFR). RuvA specifically binds to HJ cruciform DNA, conferring on it an open structure. The RuvB hexamer acts as an ATP-dependent pump, pulling dsDNA into and through the RuvAB complex. HJ branch migration allows RuvC to scan DNA until it finds its consensus sequence, where it cleaves and resolves the cruciform DNA. This is Holliday junction branch migration complex subunit RuvA from Corynebacterium aurimucosum (strain ATCC 700975 / DSM 44827 / CIP 107346 / CN-1) (Corynebacterium nigricans).